The chain runs to 919 residues: 2-oxoadipate dehydrogenase complex component E1 (919 aa).

Residues Lys-183 and Lys-188 each carry the N6-succinyllysine modification. Positions 299–320 (GKTRGRQQSRQDGDYSPDNSAQ) are disordered. 2 positions are modified to N6-succinyllysine: Lys-800 and Lys-818.

This sequence belongs to the alpha-ketoglutarate dehydrogenase family. The 2-oxoadipate dehydrogenase complex is composed of OADH (2-oxoadipate dehydrogenase; E1a), DLST (dihydrolipoamide succinyltransferase; E2) and DLD (dihydrolipoamide dehydrogenase; E3). E1a functional unit is a dimer. Interacts with DLST. The cofactor is thiamine diphosphate.

The protein resides in the mitochondrion. It catalyses the reaction N(6)-[(R)-lipoyl]-L-lysyl-[protein] + 2-oxoadipate + H(+) = N(6)-[(R)-S(8)-glutaryldihydrolipoyl]-L-lysyl-[protein] + CO2. It functions in the pathway amino-acid degradation. In terms of biological role, 2-oxoadipate dehydrogenase (E1a) component of the 2-oxoadipate dehydrogenase complex (OADHC). Participates in the first step, rate limiting for the overall conversion of 2-oxoadipate (alpha-ketoadipate) to glutaryl-CoA and CO(2) catalyzed by the whole OADHC. Catalyzes the irreversible decarboxylation of 2-oxoadipate via the thiamine diphosphate (ThDP) cofactor and subsequent transfer of the decarboxylated acyl intermediate on an oxidized dihydrolipoyl group that is covalently amidated to the E2 enzyme (dihydrolipoyllysine-residue succinyltransferase or DLST). Can catalyze the decarboxylation of 2-oxoglutarate in vitro, but at a much lower rate than 2-oxoadipate. Responsible for the last step of L-lysine, L-hydroxylysine and L-tryptophan catabolism with the common product being 2-oxoadipate. The chain is 2-oxoadipate dehydrogenase complex component E1 (DHTKD1) from Homo sapiens (Human).